The following is a 257-amino-acid chain: Ribonuclease HII (257 aa).

The 186-residue stretch at Thr-72–Lys-257 folds into the RNase H type-2 domain. A divalent metal cation contacts are provided by Asp-78, Glu-79, and Asp-170.

The protein belongs to the RNase HII family. Mn(2+) serves as cofactor. Mg(2+) is required as a cofactor.

The protein resides in the cytoplasm. It carries out the reaction Endonucleolytic cleavage to 5'-phosphomonoester.. In terms of biological role, endonuclease that specifically degrades the RNA of RNA-DNA hybrids. This chain is Ribonuclease HII, found in Bacillus cereus (strain ATCC 14579 / DSM 31 / CCUG 7414 / JCM 2152 / NBRC 15305 / NCIMB 9373 / NCTC 2599 / NRRL B-3711).